A 33-amino-acid polypeptide reads, in one-letter code: AYTTEQCRALNGTCRFYACFPKNVVIGKCDWLG.

Belongs to the beta-defensin family. Helofensin subfamily. As to expression, expressed by the venom gland.

It is found in the secreted. In terms of biological role, lethal toxin which possesses an inhibitory effect on direct electrical stimulation of the isolated hemi-diaphragm. Neither hemorrhagic nor hemolytic activities are detected. Phospholipase A2 activity, proteolytic activity and arginine esterolytic activity are absent. This chain is Helofensin-1, found in Heloderma horridum horridum (Mexican beaded lizard).